The primary structure comprises 374 residues: Chaperone protein DnaJ (374 aa).

The J domain occupies 5–70; that stretch reads DYYEVLGISR…SKRAAYDQFG (66 aa). Residues 129 to 207 form a CR-type zinc finger; that stretch reads GKTVKINIPG…CHGQGRVRQE (79 aa). The Zn(2+) site is built by C142, C145, C159, C162, C181, C184, C195, and C198. 4 CXXCXGXG motif repeats span residues 142 to 149, 159 to 166, 181 to 188, and 195 to 202; these read CEACDGSG, CGTCQGMG, CPTCRGSG, and CKSCHGQG. Residues 216–238 form a disordered region; sequence PGVDTGDRIRLSGEGEMGVDGGP.

Belongs to the DnaJ family. Homodimer. Zn(2+) serves as cofactor.

It is found in the cytoplasm. Functionally, participates actively in the response to hyperosmotic and heat shock by preventing the aggregation of stress-denatured proteins and by disaggregating proteins, also in an autonomous, DnaK-independent fashion. Unfolded proteins bind initially to DnaJ; upon interaction with the DnaJ-bound protein, DnaK hydrolyzes its bound ATP, resulting in the formation of a stable complex. GrpE releases ADP from DnaK; ATP binding to DnaK triggers the release of the substrate protein, thus completing the reaction cycle. Several rounds of ATP-dependent interactions between DnaJ, DnaK and GrpE are required for fully efficient folding. Also involved, together with DnaK and GrpE, in the DNA replication of plasmids through activation of initiation proteins. The chain is Chaperone protein DnaJ from Marinobacter nauticus (strain ATCC 700491 / DSM 11845 / VT8) (Marinobacter aquaeolei).